Consider the following 430-residue polypeptide: MVFVSDSSISLPIWDAPRARGPIVSDLAIPGSKSITNRALILAALASTPSTIIDVLRSRDTDLMTDGLRSLGITITEEAVDRYRVEPGQLSAGSVECGLAGTVMRFLPPVAAFADGPVHFDGDPQARVRPMTSILDALRSLGVEVDNNNLPFTVNAGEVPEGGVVEIDASGSSQFVSGLLLSAPRFKNGVTVKHVGGRLPSMPHIEMTVDMLRSAGIEIEESENQWVVHPGEILGRTWRIEPDLSNATPFLAAAAVTGGTIKINHWPIKTTQPGDAIRSILERMGCEVELVAQGEGYDLSVTGPVALKGIEIDMSDIGELTPTVAALAALASTESRLTGIAHLRGHETDRLAALTAEINKLGGKCTELKDGLLIEPASLHGGVWHSYADHRMATAGAIIGLAVDDVQVEDIKTTSKTFPGFENVWEEMVG.

Lysine 33, serine 34, and arginine 38 together coordinate 3-phosphoshikimate. Lysine 33 lines the phosphoenolpyruvate pocket. Phosphoenolpyruvate is bound by residues glycine 101 and arginine 129. 3-phosphoshikimate-binding residues include serine 172, serine 173, glutamine 174, serine 201, glutamate 319, and histidine 346. Position 174 (glutamine 174) interacts with phosphoenolpyruvate. The active-site Proton acceptor is the glutamate 319. Positions 350, 391, and 416 each coordinate phosphoenolpyruvate.

Belongs to the EPSP synthase family. In terms of assembly, monomer.

It is found in the cytoplasm. It catalyses the reaction 3-phosphoshikimate + phosphoenolpyruvate = 5-O-(1-carboxyvinyl)-3-phosphoshikimate + phosphate. The protein operates within metabolic intermediate biosynthesis; chorismate biosynthesis; chorismate from D-erythrose 4-phosphate and phosphoenolpyruvate: step 6/7. Functionally, catalyzes the transfer of the enolpyruvyl moiety of phosphoenolpyruvate (PEP) to the 5-hydroxyl of shikimate-3-phosphate (S3P) to produce enolpyruvyl shikimate-3-phosphate and inorganic phosphate. This is 3-phosphoshikimate 1-carboxyvinyltransferase from Corynebacterium glutamicum (strain R).